The chain runs to 672 residues: APC membrane recruitment protein 2 (672 aa).

A compositionally biased stretch (gly residues) spans 1–21; it reads METGRSRGGGAAVSERGGGAR. Disordered regions lie at residues 1–23, 74–360, and 443–560; these read METGRSRGGGAAVSERGGGARAG, TMPS…DPSA, and MLSQ…DALC. Positions 142–158 are enriched in low complexity; sequence GSLASSSVAKSHSFFSL. S154 bears the Phosphoserine mark. 2 stretches are compositionally biased toward basic and acidic residues: residues 163-175 and 201-210; these read GRSETGKGDHAEA and RGKEEEEKAV. Phosphoserine occurs at positions 223, 227, and 244. Basic and acidic residues predominate over residues 230–254; that stretch reads CVKEEPPRAARRPDSPGQDASRHAA. A compositionally biased stretch (low complexity) spans 255 to 269; that stretch reads GEPAGGEQAPASAES. S284 bears the Phosphoserine mark. The segment covering 289–303 has biased composition (basic and acidic residues); the sequence is SRGEDAEGHRREEKP. The span at 343–354 shows a compositional bias: low complexity; sequence ASAVPDPSSVDP. Phosphoserine occurs at positions 356 and 359. Low complexity predominate over residues 446–457; that stretch reads QTEDQGQGTQEG. Composition is skewed to basic and acidic residues over residues 478-488 and 502-516; these read RCGEAAKDMSS and QQKEEPKHPEKEHQE.

The protein belongs to the Amer family. Interacts with APC.

It is found in the cell membrane. Negative regulator of the canonical Wnt signaling pathway involved in neuroectodermal patterning. Acts by specifically binding phosphatidylinositol 4,5-bisphosphate (PtdIns(4,5)P2), translocating to the cell membrane and interacting with key regulators of the canonical Wnt signaling pathway, such as components of the beta-catenin destruction complex. This is APC membrane recruitment protein 2 (Amer2) from Mus musculus (Mouse).